We begin with the raw amino-acid sequence, 402 residues long: S-adenosylmethionine synthase (402 aa).

Histidine 15 contacts ATP. Residue aspartate 17 coordinates Mg(2+). Glutamate 43 serves as a coordination point for K(+). Glutamate 56 and glutamine 99 together coordinate L-methionine. Residues 99 to 109 (QSPDIAQGVDT) are flexible loop. ATP is bound by residues 174 to 176 (DGK), 247 to 248 (RF), aspartate 256, 262 to 263 (RK), alanine 279, and lysine 283. An L-methionine-binding site is contributed by aspartate 256. Lysine 287 contacts L-methionine.

This sequence belongs to the AdoMet synthase family. In terms of assembly, homotetramer; dimer of dimers. The cofactor is Mg(2+). K(+) is required as a cofactor.

The protein localises to the cytoplasm. The catalysed reaction is L-methionine + ATP + H2O = S-adenosyl-L-methionine + phosphate + diphosphate. It participates in amino-acid biosynthesis; S-adenosyl-L-methionine biosynthesis; S-adenosyl-L-methionine from L-methionine: step 1/1. Catalyzes the formation of S-adenosylmethionine (AdoMet) from methionine and ATP. The overall synthetic reaction is composed of two sequential steps, AdoMet formation and the subsequent tripolyphosphate hydrolysis which occurs prior to release of AdoMet from the enzyme. The polypeptide is S-adenosylmethionine synthase (Streptomyces coelicolor (strain ATCC BAA-471 / A3(2) / M145)).